Consider the following 430-residue polypeptide: Pre-B-cell leukemia transcription factor 2 (430 aa).

A disordered region spans residues 1 to 52; it reads MDERLLGPPPPGGGRGGLGLVGAEPGGPGEPPGGGDPGGGSGGVPGGRGKQD. A compositionally biased stretch (gly residues) spans 13-48; it reads GGRGGLGLVGAEPGGPGEPPGGGDPGGGSGGVPGGR. Positions 48 to 243 constitute a PBC domain; the sequence is RGKQDIGDIL…VMILRSRFLD (196 aa). Residues 55-134 are PBC-A; it reads DILQQIMTIT…EGVAGPEKGG (80 aa). Phosphoserine occurs at positions 136, 151, and 159. Positions 137–243 are PBC-B; the sequence is AAAAAAAAAS…VMILRSRFLD (107 aa). The segment at residues 244-306 is a DNA-binding region (homeobox; TALE-type); it reads ARRKRRNFSK…NKRIRYKKNI (63 aa). Disordered stretches follow at residues 327–347 and 375–430; these read GGHS…GGSF and LRHS…DTSN. Phosphoserine is present on residues S330 and S395. Over residues 409 to 418 the composition is skewed to polar residues; sequence VTPSSVTSPT.

Belongs to the TALE/PBX homeobox family. As to quaternary structure, forms heterodimers with MEIS1 and heterotrimers with MEIS1 and HOXA9. Interacts with PBXIP1.

The protein resides in the nucleus. In terms of biological role, transcriptional activator that binds the sequence 5'-ATCAATCAA-3'. Activates transcription of PF4 in complex with MEIS1. The protein is Pre-B-cell leukemia transcription factor 2 (Pbx2) of Mus musculus (Mouse).